The following is an 883-amino-acid chain: Phosphoenolpyruvate carboxylase (883 aa).

Active-site residues include His138 and Lys546.

It belongs to the PEPCase type 1 family. Mg(2+) serves as cofactor.

The enzyme catalyses oxaloacetate + phosphate = phosphoenolpyruvate + hydrogencarbonate. In terms of biological role, forms oxaloacetate, a four-carbon dicarboxylic acid source for the tricarboxylic acid cycle. This is Phosphoenolpyruvate carboxylase from Escherichia coli O127:H6 (strain E2348/69 / EPEC).